The following is a 445-amino-acid chain: Probable phosphoglucosamine mutase (445 aa).

Ser-99 functions as the Phosphoserine intermediate in the catalytic mechanism. 4 residues coordinate Mg(2+): Ser-99, Asp-238, Asp-240, and Asp-242. Ser-99 is modified (phosphoserine).

This sequence belongs to the phosphohexose mutase family. Mg(2+) serves as cofactor. Activated by phosphorylation.

It catalyses the reaction alpha-D-glucosamine 1-phosphate = D-glucosamine 6-phosphate. Its function is as follows. Catalyzes the conversion of glucosamine-6-phosphate to glucosamine-1-phosphate. The chain is Probable phosphoglucosamine mutase from Methanobrevibacter smithii (strain ATCC 35061 / DSM 861 / OCM 144 / PS).